The primary structure comprises 213 residues: Nucleolar protein 12 (213 aa).

The stretch at 32–95 (GFHKRKVERK…RLVTAKTESV (64 aa)) forms a coiled coil. The interval 117-213 (ARLLGLPTPE…LTGKARHSGE (97 aa)) is disordered. 2 stretches are compositionally biased toward basic residues: residues 169–181 (AHSR…KRLR) and 197–213 (SKTR…HSGE).

Belongs to the RRP17 family. Interacts with KIAA1191.

The protein resides in the nucleus. It is found in the nucleolus. Its subcellular location is the cytoplasm. Functionally, multifunctional RNA binding protein that plays a role in RNA metabolism and DNA maintenance. Participates in the resolution of DNA stress and the maintenance of genome integrity by localizing to sites of DNA insults. Also plays a role in proper nucleolar organization by limiting nucleolar size and regulating nucleolar number. Mechanistically, regulates the nucleolar levels of fibrillarin and nucleolin, two key players in pre-rRNA processing and ribosome assembly. The polypeptide is Nucleolar protein 12 (NOL12) (Bos taurus (Bovine)).